The sequence spans 197 residues: Adenylate kinase (197 aa).

Residue 16–21 (GAGKGT) coordinates ATP. The NMP stretch occupies residues 36 to 65 (STGDILRDHVARGTALGQQAGPLMEAGQLV). Residues Thr-37, Arg-42, 63-65 (QLV), 90-93 (GFPR), and Gln-97 contribute to the AMP site. The segment at 131 to 147 (DRGRQAVAEGRAPRADD) is LID. Arg-132 provides a ligand contact to ATP. Residues 137 to 158 (VAEGRAPRADDNEETARKRQQV) form a disordered region. Positions 141–153 (RAPRADDNEETAR) are enriched in basic and acidic residues. Arg-144 and Arg-155 together coordinate AMP. Gly-183 is a binding site for ATP.

It belongs to the adenylate kinase family. In terms of assembly, monomer.

It localises to the cytoplasm. It carries out the reaction AMP + ATP = 2 ADP. It participates in purine metabolism; AMP biosynthesis via salvage pathway; AMP from ADP: step 1/1. Functionally, catalyzes the reversible transfer of the terminal phosphate group between ATP and AMP. Plays an important role in cellular energy homeostasis and in adenine nucleotide metabolism. This is Adenylate kinase from Deinococcus radiodurans (strain ATCC 13939 / DSM 20539 / JCM 16871 / CCUG 27074 / LMG 4051 / NBRC 15346 / NCIMB 9279 / VKM B-1422 / R1).